Consider the following 260-residue polypeptide: Ribonuclease HII (260 aa).

The RNase H type-2 domain maps to 71–259 (RRIAGIDEAG…VREVLKASEQ (189 aa)). 3 residues coordinate a divalent metal cation: aspartate 77, glutamate 78, and aspartate 169.

It belongs to the RNase HII family. The cofactor is Mn(2+). Mg(2+) serves as cofactor.

The protein resides in the cytoplasm. It carries out the reaction Endonucleolytic cleavage to 5'-phosphomonoester.. In terms of biological role, endonuclease that specifically degrades the RNA of RNA-DNA hybrids. The polypeptide is Ribonuclease HII (Geobacillus kaustophilus (strain HTA426)).